The chain runs to 242 residues: Outer membrane protein class 4 (242 aa).

The signal sequence occupies residues 1–22; it reads MTKQLKLSALFVALLASGTAVA. Repeat copies occupy residues 69-70, 71-72, 73-74, 75-76, 77-78, 79-80, and 81-82. Residues 69 to 82 form a 7 X 2 AA tandem repeats of X-P region; that stretch reads APEPEPEPEPAPAP. The region spanning 92 to 229 is the OmpA-like domain; sequence YVDETISLSA…RVDVKIRSIV (138 aa). Cys191 and Cys214 are disulfide-bonded.

It belongs to the outer membrane OOP (TC 1.B.6) superfamily. The C-terminus exists in a monomer-dimer equilibrium.

The protein localises to the cell outer membrane. The sequence is that of Outer membrane protein class 4 from Neisseria meningitidis serogroup B (strain ATCC BAA-335 / MC58).